The chain runs to 167 residues: Phosphopantetheine adenylyltransferase (167 aa).

A substrate-binding site is contributed by serine 11. ATP contacts are provided by residues 11–12 (SF) and histidine 19. Substrate contacts are provided by lysine 43, threonine 76, and arginine 90. ATP-binding positions include 91 to 93 (GIR), glutamate 101, and 126 to 132 (YDALSST).

It belongs to the bacterial CoaD family. In terms of assembly, homohexamer. Mg(2+) is required as a cofactor.

It is found in the cytoplasm. The catalysed reaction is (R)-4'-phosphopantetheine + ATP + H(+) = 3'-dephospho-CoA + diphosphate. It participates in cofactor biosynthesis; coenzyme A biosynthesis; CoA from (R)-pantothenate: step 4/5. Functionally, reversibly transfers an adenylyl group from ATP to 4'-phosphopantetheine, yielding dephospho-CoA (dPCoA) and pyrophosphate. This is Phosphopantetheine adenylyltransferase from Lacticaseibacillus casei (strain BL23) (Lactobacillus casei).